A 128-amino-acid polypeptide reads, in one-letter code: Fluoride-specific ion channel FluC (128 aa).

Helical transmembrane passes span 10–30 (FLAV…AGLW), 40–60 (TLLV…VLLA), 71–91 (AAVT…AETV), and 102–122 (ALGY…LGLA). Na(+)-binding residues include Gly78 and Thr81.

The protein belongs to the fluoride channel Fluc/FEX (TC 1.A.43) family.

The protein resides in the cell inner membrane. It carries out the reaction fluoride(in) = fluoride(out). Its activity is regulated as follows. Na(+) is not transported, but it plays an essential structural role and its presence is essential for fluoride channel function. Its function is as follows. Fluoride-specific ion channel. Important for reducing fluoride concentration in the cell, thus reducing its toxicity. The protein is Fluoride-specific ion channel FluC of Bordetella petrii (strain ATCC BAA-461 / DSM 12804 / CCUG 43448).